We begin with the raw amino-acid sequence, 511 residues long: Fusicocca-1,10(14)-diene-8beta,16-diol C-9 hydroxylase (511 aa).

A helical transmembrane segment spans residues 7-29 (TVAALAAVFVAGTLLSRLASWIR). N-linked (GlcNAc...) asparagine glycosylation is found at Asn-64, Asn-163, and Asn-343. Residue Cys-450 coordinates heme.

It belongs to the cytochrome P450 family. Requires heme as cofactor.

It localises to the membrane. It functions in the pathway mycotoxin biosynthesis. Its function is as follows. Cytochrome P450 monooxygenase; part of the 2 gene clusters that mediate the biosynthesis of fusicoccins, diterpene glucosides that display phytohormone-like activity and function as potent activators of plasma membrane H(+)-ATPases in plants by modifying 14-3-3 proteins and cause the plant disease constriction canker. The first step in the pathway is performed by the fusicoccadiene synthase PaFS that possesses both prenyl transferase and terpene cyclase activity, converting isopentenyl diphosphate and dimethylallyl diphosphate into geranylgeranyl diphosphate (GGDP) and successively converting GGDP into fusicocca-2,10(14)-diene, a precursor for fusicoccin H. The second step is the oxidation at the C-8 position by the cytochrome P450 monooxygenase PaP450-2 to yield fusicocca-2,10(14)-diene-8-beta-ol. The cytochrome P450 monooxygenase PaP450-1 then catalyzes the hydroxylation at the C-16 position to produce fusicocca-2,10(14)-diene-8-beta,16-diol. The dioxygenase fc-dox then catalyzes the 16-oxydation of fusicocca-2,10(14)-diene-8-beta,16-diol to yield an aldehyde (8-beta-hydroxyfusicocca-1,10(14)-dien-16-al). The short-chain dehydrogenase/reductase fc-sdr catalyzes the reduction of the aldehyde to yield fusicocca-1,10(14)-diene-8-beta,16-diol. The next step is the hydroxylation at C-9 performed by the cytochrome P450 monooxygenase PaP450-3 that leads to fusicoccin H aglycon which is glycosylated to fusicoccin H by the O-glycosyltransferase PaGT. Hydroxylation at C-12 by the cytochrome P450 monooxygenase PaP450-4 leads then to the production of fusicoccin Q and is followed by methylation by the O-methyltransferase PaMT to yield fusicoccin P. Fusicoccin P is further converted to fusicoccin J via prenylation by the O-glucose prenyltransferase PaPT. Cytochrome P450 monooxygenase PaP450-5 then performs hydroxylation at C-19 to yield dideacetyl-fusicoccin A which is acetylated to 3'-O-deacetyl-fusicoccin A by the O-acetyltransferase PaAT-2. Finally, a another acetylation by the O-acetyltransferase PaAT-1 yields fusicoccin A. The chain is Fusicocca-1,10(14)-diene-8beta,16-diol C-9 hydroxylase from Phomopsis amygdali (Fusicoccum amygdali).